We begin with the raw amino-acid sequence, 248 residues long: Transmembrane protein 223 (248 aa).

Transmembrane regions (helical) follow at residues Ile46–Ala68, Leu84–Phe104, and Tyr140–Phe160.

The protein belongs to the TMEM223 family.

The protein localises to the mitochondrion inner membrane. In terms of biological role, mitochondrial ribosome-associated protein involved in the first steps of cytochrome c oxidase complex (complex IV) biogenesis. Stimulates the translation of MT-CO1 mRNA and is a constituent of early MT-CO1 assembly intermediates. The protein is Transmembrane protein 223 of Danio rerio (Zebrafish).